A 115-amino-acid chain; its full sequence is T cell receptor beta variable 7-7 (115 aa).

The first 21 residues, 1–21 (MGTSLLCWVVLGFLGTDHTGA), serve as a signal peptide directing secretion. Positions 22–115 (GVSQSPRYKV…SAMYRCASSL (94 aa)) constitute an Ig-like domain. A disulfide bridge links C42 with C111.

As to quaternary structure, alpha-beta TR is a heterodimer composed of an alpha and beta chain; disulfide-linked. The alpha-beta TR is associated with the transmembrane signaling CD3 coreceptor proteins to form the TR-CD3 (TcR or TCR). The assembly of alpha-beta TR heterodimers with CD3 occurs in the endoplasmic reticulum where a single alpha-beta TR heterodimer associates with one CD3D-CD3E heterodimer, one CD3G-CD3E heterodimer and one CD247 homodimer forming a stable octameric structure. CD3D-CD3E and CD3G-CD3E heterodimers preferentially associate with TR alpha and TR beta chains, respectively. The association of the CD247 homodimer is the last step of TcR assembly in the endoplasmic reticulum and is required for transport to the cell surface.

Its subcellular location is the cell membrane. Functionally, v region of the variable domain of T cell receptor (TR) beta chain that participates in the antigen recognition. Alpha-beta T cell receptors are antigen specific receptors which are essential to the immune response and are present on the cell surface of T lymphocytes. Recognize peptide-major histocompatibility (MH) (pMH) complexes that are displayed by antigen presenting cells (APC), a prerequisite for efficient T cell adaptive immunity against pathogens. Binding of alpha-beta TR to pMH complex initiates TR-CD3 clustering on the cell surface and intracellular activation of LCK that phosphorylates the ITAM motifs of CD3G, CD3D, CD3E and CD247 enabling the recruitment of ZAP70. In turn ZAP70 phosphorylates LAT, which recruits numerous signaling molecules to form the LAT signalosome. The LAT signalosome propagates signal branching to three major signaling pathways, the calcium, the mitogen-activated protein kinase (MAPK) kinase and the nuclear factor NF-kappa-B (NF-kB) pathways, leading to the mobilization of transcription factors that are critical for gene expression and essential for T cell growth and differentiation. The T cell repertoire is generated in the thymus, by V-(D)-J rearrangement. This repertoire is then shaped by intrathymic selection events to generate a peripheral T cell pool of self-MH restricted, non-autoaggressive T cells. Post-thymic interaction of alpha-beta TR with the pMH complexes shapes TR structural and functional avidity. This Homo sapiens (Human) protein is T cell receptor beta variable 7-7.